Reading from the N-terminus, the 139-residue chain is Ribulose bisphosphate carboxylase small subunit, chromosomal (139 aa).

The protein belongs to the RuBisCO small chain family. As to quaternary structure, heterohexadecamer of 8 large and 8 small subunits.

RuBisCO catalyzes two reactions: the carboxylation of D-ribulose 1,5-bisphosphate, the primary event in carbon dioxide fixation, as well as the oxidative fragmentation of the pentose substrate. Both reactions occur simultaneously and in competition at the same active site. Although the small subunit is not catalytic it is essential for maximal activity. The sequence is that of Ribulose bisphosphate carboxylase small subunit, chromosomal from Cupriavidus necator (Alcaligenes eutrophus).